We begin with the raw amino-acid sequence, 164 residues long: Lipoprotein signal peptidase (164 aa).

A run of 3 helical transmembrane segments spans residues 12 to 32 (FLWLAVVVFVIDQVTKHWIVA), 70 to 90 (WLFTGIAIAVCGLVTWWLKET), and 93 to 113 (QQVMLPVAFCLIIGGALGNVF). Residues D123 and D141 contribute to the active site. Residues 133–153 (YWPAFNVADSAICLGAFLLVI) traverse the membrane as a helical segment.

Belongs to the peptidase A8 family.

The protein localises to the cell inner membrane. It catalyses the reaction Release of signal peptides from bacterial membrane prolipoproteins. Hydrolyzes -Xaa-Yaa-Zaa-|-(S,diacylglyceryl)Cys-, in which Xaa is hydrophobic (preferably Leu), and Yaa (Ala or Ser) and Zaa (Gly or Ala) have small, neutral side chains.. The protein operates within protein modification; lipoprotein biosynthesis (signal peptide cleavage). Its function is as follows. This protein specifically catalyzes the removal of signal peptides from prolipoproteins. The protein is Lipoprotein signal peptidase of Pseudoalteromonas atlantica (strain T6c / ATCC BAA-1087).